A 584-amino-acid polypeptide reads, in one-letter code: Protein spire homolog 1 (584 aa).

Residues 1-30 (MANTVEADGSNDEGYEAAEEGPEDEEDEKR) form a disordered region. The KIND domain maps to 1 to 73 (MANTVEADGS…RALFAETMEL (73 aa)). Positions 9 to 28 (GSNDEGYEAAEEGPEDEEDE) are enriched in acidic residues. Residues 71-99 (MELHTFLAKVKSAKENLKKIQEMEKSDES) adopt a coiled-coil conformation. 2 consecutive WH2 domains span residues 147–165 (PYEM…LRKV) and 211–228 (LHER…LRPV). Basic and acidic residues predominate over residues 224–238 (KLRPVSPEEIRRSRL). The segment at 224 to 366 (KLRPVSPEEI…PTNVRQFLPP (143 aa)) is disordered. S229 carries the post-translational modification Phosphoserine. The segment covering 242 to 272 (TPESTKNLMESSMVNGGLTSQTKENGLSSAE) has biased composition (polar residues). Residues S292, S293, and S295 each carry the phosphoserine modification. Low complexity predominate over residues 302–320 (KSTSSSSVSPSFPEEPVLE). T337 is subject to Phosphothreonine. Residues 340 to 356 (PERRQPPQRRHSIEKET) are compositionally biased toward basic and acidic residues. Polar residues predominate over residues 357 to 366 (PTNVRQFLPP). The tract at residues 384 to 404 (LALTVEEVMHIRQVLVKAELE) is spir-box. Phosphoserine occurs at positions 506, 510, and 563.

Belongs to the spire family. In terms of assembly, interacts with FMN2.

The protein resides in the cytoplasm. Its subcellular location is the cytoskeleton. The protein localises to the cytosol. It localises to the cleavage furrow. It is found in the perinuclear region. The protein resides in the cell membrane. Its subcellular location is the cytoplasmic vesicle membrane. Functionally, acts as an actin nucleation factor, remains associated with the slow-growing pointed end of the new filament. Involved in intracellular vesicle transport along actin fibers, providing a novel link between actin cytoskeleton dynamics and intracellular transport. Required for asymmetric spindle positioning and asymmetric cell division during meiosis. Required for normal formation of the cleavage furrow and for polar body extrusion during female germ cell meiosis. Also acts in the nucleus: together with FMN2, promotes assembly of nuclear actin filaments in response to DNA damage in order to facilitate movement of chromatin and repair factors after DNA damage. In addition, promotes innate immune signaling downstream of dsRNA sensing. Mechanistically, contributes to IRF3 phosphorylation and activation downstream of MAVS and upstream of TBK1. The polypeptide is Protein spire homolog 1 (SPIRE1) (Macaca fascicularis (Crab-eating macaque)).